The primary structure comprises 415 residues: MIDRKLLLQDFDKVALSLKKRNHAMDDELERLCEVIVHYKKQLIELEGLQAFQNKVSKEFGIKMAQKADTSDLKKELENNKIKLNELSKSVGELEQQIDLKLSIIPNLVDEKTPLGANEEDNIEIKKILTPRVFTFKPKEHFELAQQNGWIDFEGGVKLAKSRFSVIRGFGAKIYRALIHLMLDFNEKNGFEIIYTPALVNEKMLFGTGQLPKFKEDIFKIENENLYLIPTAEVTLTNLYNDTIISVENLPIKMTAHTPCFRSEAGSAGKDTRGMIRQHQFDKVELVAITHPKESDVMQEHMLESASEILKALELPHRFVQLCSADLGFSASNTIDIEVWLPGQNCYREISSVSNTRDFQARRAKIRFKENQKNQLAHTLNGSSLAVGRTMVALMENHQQADGSIHIPKALEKYL.

Position 231–233 (T231–E233) interacts with L-serine. Residue R262–E264 participates in ATP binding. E285 provides a ligand contact to L-serine. ATP is bound at residue E349–S352. S383 is a binding site for L-serine.

The protein belongs to the class-II aminoacyl-tRNA synthetase family. Type-1 seryl-tRNA synthetase subfamily. Homodimer. The tRNA molecule binds across the dimer.

The protein localises to the cytoplasm. It catalyses the reaction tRNA(Ser) + L-serine + ATP = L-seryl-tRNA(Ser) + AMP + diphosphate + H(+). The enzyme catalyses tRNA(Sec) + L-serine + ATP = L-seryl-tRNA(Sec) + AMP + diphosphate + H(+). The protein operates within aminoacyl-tRNA biosynthesis; selenocysteinyl-tRNA(Sec) biosynthesis; L-seryl-tRNA(Sec) from L-serine and tRNA(Sec): step 1/1. Catalyzes the attachment of serine to tRNA(Ser). Is also able to aminoacylate tRNA(Sec) with serine, to form the misacylated tRNA L-seryl-tRNA(Sec), which will be further converted into selenocysteinyl-tRNA(Sec). This chain is Serine--tRNA ligase, found in Helicobacter pylori (strain G27).